A 582-amino-acid polypeptide reads, in one-letter code: ATP-dependent lipid A-core flippase (582 aa).

5 helical membrane-spanning segments follow: residues 16–36, 63–83, 153–173, 253–273, and 275–295; these read LWPT…ALIL, VLVW…ITSY, IIGL…ILIV, PIIQ…ASFP, and VMDN…IALM. An ABC transmembrane type-1 domain is found at 28–310; the sequence is IVAGVALILN…LTNVNAQFQR (283 aa). Residues 342-578 enclose the ABC transporter domain; the sequence is VEFRNVTFTY…RGVYAQLHKM (237 aa). 376-383 serves as a coordination point for ATP; the sequence is GRSGSGKS.

It belongs to the ABC transporter superfamily. Lipid exporter (TC 3.A.1.106) family. In terms of assembly, homodimer.

It is found in the cell inner membrane. The enzyme catalyses ATP + H2O + lipid A-core oligosaccharideSide 1 = ADP + phosphate + lipid A-core oligosaccharideSide 2.. In terms of biological role, involved in lipopolysaccharide (LPS) biosynthesis. Translocates lipid A-core from the inner to the outer leaflet of the inner membrane. Transmembrane domains (TMD) form a pore in the inner membrane and the ATP-binding domain (NBD) is responsible for energy generation. The chain is ATP-dependent lipid A-core flippase from Shigella sonnei (strain Ss046).